Here is a 523-residue protein sequence, read N- to C-terminus: (R)-citramalate synthase (523 aa).

The Pyruvate carboxyltransferase domain occupies 6–272 (VEVLDTTLRD…KGNESLKKLK (267 aa)).

Belongs to the alpha-IPM synthase/homocitrate synthase family.

It carries out the reaction pyruvate + acetyl-CoA + H2O = (3R)-citramalate + CoA + H(+). The protein operates within amino-acid biosynthesis; L-isoleucine biosynthesis; 2-oxobutanoate from pyruvate: step 1/3. Inhibited by isoleucine. Functionally, catalyzes the condensation of pyruvate and acetyl-coenzyme A to form (R)-citramalate. Makes part of a pathway for isoleucine biosynthesis, i.e. the citramalate-dependent pathway. Also displays a low alpha-isopropylmalate synthase activity, using 2-oxoisovalerate as substrate, but is unable to use 2-oxoglutarate. The sequence is that of (R)-citramalate synthase from Sulfolobus acidocaldarius (strain ATCC 33909 / DSM 639 / JCM 8929 / NBRC 15157 / NCIMB 11770).